Reading from the N-terminus, the 353-residue chain is Phosphate acyltransferase (353 aa).

The protein belongs to the PlsX family. As to quaternary structure, homodimer. Probably interacts with PlsY.

Its subcellular location is the cytoplasm. The enzyme catalyses a fatty acyl-[ACP] + phosphate = an acyl phosphate + holo-[ACP]. It participates in lipid metabolism; phospholipid metabolism. In terms of biological role, catalyzes the reversible formation of acyl-phosphate (acyl-PO(4)) from acyl-[acyl-carrier-protein] (acyl-ACP). This enzyme utilizes acyl-ACP as fatty acyl donor, but not acyl-CoA. This chain is Phosphate acyltransferase, found in Rhodopseudomonas palustris (strain ATCC BAA-98 / CGA009).